We begin with the raw amino-acid sequence, 95 residues long: UPF0132 membrane protein AF_0736 (95 aa).

3 helical membrane-spanning segments follow: residues C2 to V22, T32 to L52, and V55 to E75.

It belongs to the UPF0132 family.

Its subcellular location is the cell membrane. This chain is UPF0132 membrane protein AF_0736, found in Archaeoglobus fulgidus (strain ATCC 49558 / DSM 4304 / JCM 9628 / NBRC 100126 / VC-16).